The following is a 353-amino-acid chain: Protein MGF 360-10L (353 aa).

The stretch at 57 to 89 (DLNTALMLATKENNYQLIKLFTEWGADINYGLI) is one ANK repeat. N172 carries an N-linked (GlcNAc...) asparagine; by host glycan. 2 helical membrane passes run 206 to 228 (LNTW…NLYE) and 249 to 271 (NFLT…IASI). N342 carries an N-linked (GlcNAc...) asparagine; by host glycan.

The protein belongs to the asfivirus MGF 360 family.

The protein localises to the host membrane. Functionally, plays a role in virus cell tropism, and may be required for efficient virus replication in macrophages. In African swine fever virus (isolate Warthog/Namibia/Wart80/1980) (ASFV), this protein is Protein MGF 360-10L.